The chain runs to 438 residues: Alpha-methylserine aldolase (438 aa).

Residue Lys252 is modified to N6-(pyridoxal phosphate)lysine.

Belongs to the SHMT family. Alpha-methylserine aldolase subfamily. Homodimer. It depends on pyridoxal 5'-phosphate as a cofactor.

The enzyme catalyses 2-methyl-L-serine = formaldehyde + L-alanine. With respect to regulation, in the alpha-methyl-L-serine synthesis reaction, activity is inhibited by an excess amount of formaldehyde (at a concentration greater than 10 mM). Functionally, catalyzes the reversible interconversion of alpha-methyl-L-serine to L-alanine and formaldehyde. Cannot use alpha-methyl-D-serine, L-serine or D-serine. Cannot use D-alanine instead of L-alanine as the substrate for alpha-methyl-L-serine synthesis. Does not require tetrahydrofolate (THF) for activity. The polypeptide is Alpha-methylserine aldolase (Ralstonia sp).